A 924-amino-acid polypeptide reads, in one-letter code: Lon protease homolog 3, mitochondrial (924 aa).

Residues 1–63 (MMPKRFNTSG…PVQSLLLFRA (63 aa)) constitute a mitochondrion transit peptide. The region spanning 112–325 (VIALPLPHKP…LTLELVKKQV (214 aa)) is the Lon N-terminal domain. 447-454 (GPPGVGKT) contributes to the ATP binding site. The Lon proteolytic domain occupies 738–922 (QTPVGVVMGL…EKIFDLAFNY (185 aa)). Active-site residues include Ser-828 and Lys-871.

This sequence belongs to the peptidase S16 family. In terms of assembly, homohexamer or homoheptamer. Organized in a ring with a central cavity.

Its subcellular location is the mitochondrion matrix. It carries out the reaction Hydrolysis of proteins in presence of ATP.. ATP-dependent serine protease that mediates the selective degradation of misfolded, unassembled or oxidatively damaged polypeptides as well as certain short-lived regulatory proteins in the mitochondrial matrix. May also have a chaperone function in the assembly of inner membrane protein complexes. Participates in the regulation of mitochondrial gene expression and in the maintenance of the integrity of the mitochondrial genome. Binds to mitochondrial DNA in a site-specific manner. This chain is Lon protease homolog 3, mitochondrial (LON3), found in Arabidopsis thaliana (Mouse-ear cress).